The primary structure comprises 72 residues: uncharacterized protein (72 aa).

Residues 33 to 53 form a helical membrane-spanning segment; sequence VCIFFSLIFFFFFFFFCVNWG.

It is found in the membrane. This is an uncharacterized protein from Dictyostelium discoideum (Social amoeba).